Here is a 306-residue protein sequence, read N- to C-terminus: Glutamyl-Q tRNA(Asp) synthetase (306 aa).

Residues 29–33 (RFAPS) and aspartate 65 each bind L-glutamate. Positions 32-42 (PSPTGPLHLGN) match the 'HIGH' region motif. Zn(2+) is bound by residues cysteine 121, cysteine 123, tyrosine 141, and cysteine 145. L-glutamate contacts are provided by tyrosine 188 and arginine 206. The 'KMSKS' region signature appears at 244 to 248 (KLAKR). Lysine 247 is a binding site for ATP.

Belongs to the class-I aminoacyl-tRNA synthetase family. GluQ subfamily. The cofactor is Zn(2+).

Its function is as follows. Catalyzes the tRNA-independent activation of glutamate in presence of ATP and the subsequent transfer of glutamate onto a tRNA(Asp). Glutamate is transferred on the 2-amino-5-(4,5-dihydroxy-2-cyclopenten-1-yl) moiety of the queuosine in the wobble position of the QUC anticodon. This is Glutamyl-Q tRNA(Asp) synthetase from Prochlorococcus marinus (strain MIT 9303).